Consider the following 200-residue polypeptide: Mediator of RNA polymerase II transcription subunit 22 (200 aa).

A coiled-coil region spans residues 93–123 (SVNDAISLQNQQLRSLQEECDKKLISLRDEI). The disordered stretch occupies residues 159–200 (ASPSSSSSSTQGDQEEVEILPSQETEPQHHLNGQGTSSLEKM). Positions 189–200 (LNGQGTSSLEKM) are enriched in polar residues.

This sequence belongs to the Mediator complex subunit 22 family. In terms of assembly, component of the Mediator complex.

It is found in the nucleus. In terms of biological role, component of the Mediator complex, a coactivator involved in the regulated transcription of nearly all RNA polymerase II-dependent genes. Mediator functions as a bridge to convey information from gene-specific regulatory proteins to the basal RNA polymerase II transcription machinery. Mediator is recruited to promoters by direct interactions with regulatory proteins and serves as a scaffold for the assembly of a functional preinitiation complex with RNA polymerase II and the general transcription factors. This chain is Mediator of RNA polymerase II transcription subunit 22 (med22), found in Takifugu rubripes (Japanese pufferfish).